Consider the following 61-residue polypeptide: Probable tautomerase spyM18_1099 (61 aa).

The Proton acceptor; via imino nitrogen role is filled by Pro-2.

The protein belongs to the 4-oxalocrotonate tautomerase family.

The sequence is that of Probable tautomerase spyM18_1099 from Streptococcus pyogenes serotype M18 (strain MGAS8232).